Reading from the N-terminus, the 447-residue chain is Chromosomal replication initiator protein DnaA (447 aa).

The segment at 1–74 is domain I, interacts with DnaA modulators; that stretch reads MPDVESFWHS…TGFKLTGAEV (74 aa). A domain II region spans residues 74–109; that stretch reads VMPHFVVADEKDAALAQELEEPAEEEVVFSEQSKKA. Residues 110–326 are domain III, AAA+ region; sequence MLNPKYTFDT…GALVRVQAFA (217 aa). Residues Gly154, Gly156, Lys157, and Thr158 each contribute to the ATP site. Residues 327-447 are domain IV, binds dsDNA; that stretch reads TINGEDITTS…VSEIKNLLNS (121 aa).

Belongs to the DnaA family. In terms of assembly, oligomerizes as a right-handed, spiral filament on DNA at oriC.

The protein resides in the cytoplasm. In terms of biological role, plays an essential role in the initiation and regulation of chromosomal replication. ATP-DnaA binds to the origin of replication (oriC) to initiate formation of the DNA replication initiation complex once per cell cycle. Binds the DnaA box (a 9 base pair repeat at the origin) and separates the double-stranded (ds)DNA. Forms a right-handed helical filament on oriC DNA; dsDNA binds to the exterior of the filament while single-stranded (ss)DNA is stabiized in the filament's interior. The ATP-DnaA-oriC complex binds and stabilizes one strand of the AT-rich DNA unwinding element (DUE), permitting loading of DNA polymerase. After initiation quickly degrades to an ADP-DnaA complex that is not apt for DNA replication. Binds acidic phospholipids. Strand separation requires the DnaA boxes and adjacent DnaA-trio motifs as well as ATP. The chain is Chromosomal replication initiator protein DnaA from Enterococcus faecalis (strain ATCC 700802 / V583).